We begin with the raw amino-acid sequence, 500 residues long: NAD(P)H-quinone oxidoreductase chain 4, chloroplastic (500 aa).

Helical transmembrane passes span F4 to L24, Y35 to F55, L87 to V107, L113 to S130, L134 to M154, F167 to L187, V207 to I227, H242 to I262, A272 to A292, I305 to D325, G330 to G350, L386 to T406, I416 to M436, and L462 to V482.

The protein belongs to the complex I subunit 4 family.

Its subcellular location is the plastid. It localises to the chloroplast thylakoid membrane. It carries out the reaction a plastoquinone + NADH + (n+1) H(+)(in) = a plastoquinol + NAD(+) + n H(+)(out). The enzyme catalyses a plastoquinone + NADPH + (n+1) H(+)(in) = a plastoquinol + NADP(+) + n H(+)(out). This Helianthus annuus (Common sunflower) protein is NAD(P)H-quinone oxidoreductase chain 4, chloroplastic.